The following is a 106-amino-acid chain: ATP-dependent Clp protease adapter protein ClpS (106 aa).

It belongs to the ClpS family. As to quaternary structure, binds to the N-terminal domain of the chaperone ClpA.

In terms of biological role, involved in the modulation of the specificity of the ClpAP-mediated ATP-dependent protein degradation. The protein is ATP-dependent Clp protease adapter protein ClpS of Vibrio parahaemolyticus serotype O3:K6 (strain RIMD 2210633).